We begin with the raw amino-acid sequence, 333 residues long: Casein kinase II subunit alpha-2 (333 aa).

The Protein kinase domain maps to 34–319; the sequence is YEVVRKVGRG…AREAMAHPYF (286 aa). ATP-binding positions include 40-48 and lysine 63; that span reads VGRGKYSEV. Catalysis depends on aspartate 151, which acts as the Proton acceptor.

This sequence belongs to the protein kinase superfamily. Ser/Thr protein kinase family. CK2 subfamily. As to quaternary structure, monomer. Autophosphorylated.

It is found in the cytoplasm. The catalysed reaction is L-seryl-[protein] + ATP = O-phospho-L-seryl-[protein] + ADP + H(+). It catalyses the reaction L-threonyl-[protein] + ATP = O-phospho-L-threonyl-[protein] + ADP + H(+). In terms of biological role, casein kinases are operationally defined by their preferential utilization of acidic proteins such as caseins as substrates. It can phosphorylate a large number of proteins. Involved in photoperiod sensitivity (PS). Increases days-to-heading under natural day (ND) and long day (LD) conditions, but not under short day (SD) conditions. The chain is Casein kinase II subunit alpha-2 from Oryza sativa subsp. indica (Rice).